The chain runs to 361 residues: Dihydroorotate dehydrogenase (quinone) (361 aa).

FMN contacts are provided by residues 69–73 and T93; that span reads AGFDK. K73 serves as a coordination point for substrate. 118–122 contributes to the substrate binding site; it reads NRLGF. Positions 147 and 180 each coordinate FMN. N180 is a substrate binding site. S183 (nucleophile) is an active-site residue. N185 contributes to the substrate binding site. Residues K221 and T249 each coordinate FMN. Substrate is bound at residue 250–251; the sequence is NT. FMN is bound by residues G271, G300, and 321–322; that span reads YT.

The protein belongs to the dihydroorotate dehydrogenase family. Type 2 subfamily. As to quaternary structure, monomer. It depends on FMN as a cofactor.

It is found in the cell membrane. It carries out the reaction (S)-dihydroorotate + a quinone = orotate + a quinol. It functions in the pathway pyrimidine metabolism; UMP biosynthesis via de novo pathway; orotate from (S)-dihydroorotate (quinone route): step 1/1. Its function is as follows. Catalyzes the conversion of dihydroorotate to orotate with quinone as electron acceptor. The sequence is that of Dihydroorotate dehydrogenase (quinone) from Roseiflexus sp. (strain RS-1).